A 613-amino-acid chain; its full sequence is Dihydroxy-acid dehydratase (613 aa).

Asp81 is a binding site for Mg(2+). Cys122 contacts [2Fe-2S] cluster. Mg(2+) contacts are provided by Asp123 and Lys124. Lys124 is subject to N6-carboxylysine. Cys193 is a [2Fe-2S] cluster binding site. Residue Glu489 participates in Mg(2+) binding. Ser515 acts as the Proton acceptor in catalysis.

Belongs to the IlvD/Edd family. As to quaternary structure, homodimer. The cofactor is [2Fe-2S] cluster. Requires Mg(2+) as cofactor.

The enzyme catalyses (2R)-2,3-dihydroxy-3-methylbutanoate = 3-methyl-2-oxobutanoate + H2O. It carries out the reaction (2R,3R)-2,3-dihydroxy-3-methylpentanoate = (S)-3-methyl-2-oxopentanoate + H2O. The protein operates within amino-acid biosynthesis; L-isoleucine biosynthesis; L-isoleucine from 2-oxobutanoate: step 3/4. Its pathway is amino-acid biosynthesis; L-valine biosynthesis; L-valine from pyruvate: step 3/4. Functions in the biosynthesis of branched-chain amino acids. Catalyzes the dehydration of (2R,3R)-2,3-dihydroxy-3-methylpentanoate (2,3-dihydroxy-3-methylvalerate) into 2-oxo-3-methylpentanoate (2-oxo-3-methylvalerate) and of (2R)-2,3-dihydroxy-3-methylbutanoate (2,3-dihydroxyisovalerate) into 2-oxo-3-methylbutanoate (2-oxoisovalerate), the penultimate precursor to L-isoleucine and L-valine, respectively. The protein is Dihydroxy-acid dehydratase of Pseudomonas putida (strain ATCC 700007 / DSM 6899 / JCM 31910 / BCRC 17059 / LMG 24140 / F1).